A 179-amino-acid chain; its full sequence is MSSRILTSDVIGIDVLLHDHHAVLAKSTGGAVAVFANNAPAFYAVTPARMAELLALEEKLSRPGSDVALDAQFYEEPEAAPVAIPCGKFAMYPAWQPDADFQRQAALWGVALREPVTAEELAAFIAYWQAEGKVFHHIQWQQKLARSVQISRSSNGGMPQRDINSVSEPDNHIPPGFRG.

A compositionally biased stretch (polar residues) spans 151-168 (SRSSNGGMPQRDINSVSE). The interval 151-179 (SRSSNGGMPQRDINSVSEPDNHIPPGFRG) is disordered.

It belongs to the DnaT family. Homooligomerizes. Interacts with PriB. Component of the replication restart primosome. Primosome assembly occurs via a 'hand-off' mechanism. PriA binds to replication forks, subsequently PriB then DnaT bind; DnaT then displaces ssDNA to generate the helicase loading substrate.

Involved in the restart of stalled replication forks, which reloads the replicative helicase on sites other than the origin of replication. Can function in multiple replication restart pathways. Displaces ssDNA from a PriB-ssDNA complex. Probably forms a spiral filament on ssDNA. In Salmonella heidelberg (strain SL476), this protein is Replication restart protein DnaT.